A 105-amino-acid chain; its full sequence is Heat shock protein HspQ (105 aa).

This sequence belongs to the HspQ family.

The protein localises to the cytoplasm. Its function is as follows. Involved in the degradation of certain denaturated proteins, including DnaA, during heat shock stress. This Sodalis glossinidius (strain morsitans) protein is Heat shock protein HspQ.